A 503-amino-acid polypeptide reads, in one-letter code: Probable cytosol aminopeptidase (503 aa).

Residues lysine 271 and aspartate 276 each contribute to the Mn(2+) site. The active site involves lysine 283. 3 residues coordinate Mn(2+): aspartate 294, aspartate 353, and glutamate 355. Arginine 357 is a catalytic residue.

This sequence belongs to the peptidase M17 family. It depends on Mn(2+) as a cofactor.

It localises to the cytoplasm. The catalysed reaction is Release of an N-terminal amino acid, Xaa-|-Yaa-, in which Xaa is preferably Leu, but may be other amino acids including Pro although not Arg or Lys, and Yaa may be Pro. Amino acid amides and methyl esters are also readily hydrolyzed, but rates on arylamides are exceedingly low.. It carries out the reaction Release of an N-terminal amino acid, preferentially leucine, but not glutamic or aspartic acids.. Its function is as follows. Presumably involved in the processing and regular turnover of intracellular proteins. Catalyzes the removal of unsubstituted N-terminal amino acids from various peptides. The sequence is that of Probable cytosol aminopeptidase from Chlorobaculum parvum (strain DSM 263 / NCIMB 8327) (Chlorobium vibrioforme subsp. thiosulfatophilum).